Reading from the N-terminus, the 319-residue chain is Protein-methionine methyltransferase laeA (319 aa).

The tract at residues 269–293 (REPQSGTCSVQRENGANGDRSTLSA) is disordered. The span at 270 to 293 (EPQSGTCSVQRENGANGDRSTLSA) shows a compositional bias: polar residues.

This sequence belongs to the methyltransferase superfamily. LaeA methyltransferase family. Component of the heterotrimeric velvet complex composed of laeA, veA and velB; VeA acting as a bridging protein between laeA and velB.

The protein localises to the nucleus. It carries out the reaction L-methionyl-[protein] + S-adenosyl-L-methionine = S-methyl-L-methionyl-[protein] + S-adenosyl-L-homocysteine. Functionally, methyltransferase; component of the velvet transcription factor complex that acts as a global regulator for secondary metabolite gene expression. Controls the expression of the chaetoglobosin A biosynthesis cluster via the cheR transcription factor and the subsequent production of chaetoglobosin A. Positively regulates the expression of smtA and negatively regulates the expression of velB. LaeA also regulates pigmentation and spores production. This Chaetomium globosum (strain ATCC 6205 / CBS 148.51 / DSM 1962 / NBRC 6347 / NRRL 1970) (Soil fungus) protein is Protein-methionine methyltransferase laeA.